Here is a 509-residue protein sequence, read N- to C-terminus: Maturase K (509 aa).

It belongs to the intron maturase 2 family. MatK subfamily.

It localises to the plastid. It is found in the chloroplast. Its function is as follows. Usually encoded in the trnK tRNA gene intron. Probably assists in splicing its own and other chloroplast group II introns. In Jacaranda mimosifolia (Jacaranda), this protein is Maturase K.